The chain runs to 397 residues: MAKGSAGDAPNTRDTSFKRPKIRESCTHCSSQKIRCTKERPACARCVNKGLLCQYNISRRTGTRRHSVRATPEPETTISNAPTSSVPPDSVKIDGKQSPAMSDFALLDGLETFNNSLWHQPITTDIQDIDMQYFDFFDPGGYQAEPEPINSFDIDSTLLCGTSTAGYLPELDAEASTRPSSSSSPPSQRSDGGRATTHGGGGCISTALQIFSELHVSSSACPIAAGAPSHNIREFDHVLDSNRAALEKLSSILDCPPCCHDQEVLTALFLAVQKALSWYSAALDVAGDGEPTSPSSRVKSPPAFLGSYALGAQAQTLARAYVVMAQLQQHFQPLLAKLQRKSSLSALGARSSSTTSLSSVSSLQSSTSGSAVIECQKRALQEALEDVVAKIEGIKRG.

The segment at residues 26–53 (CTHCSSQKIRCTKERPACARCVNKGLLC) is a DNA-binding region (zn(2)-C6 fungal-type). 2 disordered regions span residues 62 to 92 (GTRR…DSVK) and 173 to 198 (AEAS…ATTH). Positions 74-87 (PETTISNAPTSSVP) are enriched in polar residues. A compositionally biased stretch (low complexity) spans 179–197 (PSSSSSPPSQRSDGGRATT).

Its subcellular location is the nucleus. In terms of biological role, transcription regulator of the gene cluster that mediates the biosynthesis of cercosporin, a light-activated, non-host-selective toxin. The perylenequinone chromophore of cercosporin absorbs light energy to attain an electronically-activated triplet state and produces active oxygen species such as the hydroxyl radical, superoxide, hydrogen peroxide or singlet oxygen upon reaction with oxygen molecules. These reactive oxygen species cause damage to various cellular components including lipids, proteins and nucleic acids. In Cercospora nicotianae (Barn spot disease fungus), this protein is Cercosporin biosynthesis regulatory protein CTB8.